Here is a 210-residue protein sequence, read N- to C-terminus: Secreted isochorismatase effector Isc1 (210 aa).

Catalysis depends on residues D25, K90, and C124.

Belongs to the isochorismatase family.

It is found in the secreted. The protein localises to the host cytoplasm. The protein resides in the host nucleus. It carries out the reaction isochorismate + H2O = (2S,3S)-2,3-dihydroxy-2,3-dihydrobenzoate + pyruvate. Secreted isochorismatase required for full virulence of P.sojae. Suppresses salicylate-mediated innate immunity of the host by disrupting the plant salicylate metabolism pathway via hydrolysis of its isochorismate precursor. This is Secreted isochorismatase effector Isc1 from Phytophthora sojae (strain P6497) (Soybean stem and root rot agent).